An 803-amino-acid chain; its full sequence is Phosphoribosylformylglycinamidine synthase subunit PurL (803 aa).

Residue His-65 is part of the active site. Tyr-68 and Lys-107 together coordinate ATP. Glu-109 provides a ligand contact to Mg(2+). Residues 110–113 (SHNH) and Arg-132 each bind substrate. The Proton acceptor role is filled by His-111. Residue Asp-133 participates in Mg(2+) binding. Gln-256 lines the substrate pocket. Residue Asp-284 coordinates Mg(2+). Position 328–330 (328–330 (ESQ)) interacts with substrate. Residues Asn-537 and Gly-574 each coordinate ATP. Residue Asn-575 participates in Mg(2+) binding. Ser-577 is a substrate binding site.

It belongs to the FGAMS family. In terms of assembly, monomer. Part of the FGAM synthase complex composed of 1 PurL, 1 PurQ and 2 PurS subunits.

The protein localises to the cytoplasm. The catalysed reaction is N(2)-formyl-N(1)-(5-phospho-beta-D-ribosyl)glycinamide + L-glutamine + ATP + H2O = 2-formamido-N(1)-(5-O-phospho-beta-D-ribosyl)acetamidine + L-glutamate + ADP + phosphate + H(+). The protein operates within purine metabolism; IMP biosynthesis via de novo pathway; 5-amino-1-(5-phospho-D-ribosyl)imidazole from N(2)-formyl-N(1)-(5-phospho-D-ribosyl)glycinamide: step 1/2. Its function is as follows. Part of the phosphoribosylformylglycinamidine synthase complex involved in the purines biosynthetic pathway. Catalyzes the ATP-dependent conversion of formylglycinamide ribonucleotide (FGAR) and glutamine to yield formylglycinamidine ribonucleotide (FGAM) and glutamate. The FGAM synthase complex is composed of three subunits. PurQ produces an ammonia molecule by converting glutamine to glutamate. PurL transfers the ammonia molecule to FGAR to form FGAM in an ATP-dependent manner. PurS interacts with PurQ and PurL and is thought to assist in the transfer of the ammonia molecule from PurQ to PurL. The polypeptide is Phosphoribosylformylglycinamidine synthase subunit PurL (Prochlorococcus marinus (strain NATL1A)).